The sequence spans 215 residues: Ribonuclease S-6 (215 aa).

The signal sequence occupies residues 1 to 22 (MFNLPLTSVFVIFLFALSPIYG). Position 32 (Q32) interacts with RNA. The cysteines at positions 38 and 43 are disulfide-linked. A glycan (N-linked (GlcNAc...) asparagine) is linked at N49. Residue H53 coordinates RNA. The active-site Proton donor is the H53. Residue N59 is glycosylated (N-linked (GlcNAc...) asparagine). The cysteines at positions 67 and 116 are disulfide-linked. RNA-binding positions include 91-92 (DL), R94, F105, 108-109 (RE), and 112-113 (KH). Residue E109 is part of the active site. The active-site Proton acceptor is the H113. N-linked (GlcNAc...) asparagine glycans are attached at residues N160 and N172. Cystine bridges form between C175–C204 and C187–C198.

This sequence belongs to the RNase T2 family.

Its subcellular location is the secreted. It localises to the extracellular space. The catalysed reaction is a ribonucleotidyl-ribonucleotide-RNA + H2O = a 3'-end 3'-phospho-ribonucleotide-RNA + a 5'-end dephospho-ribonucleoside-RNA + H(+). Functionally, self-incompatibility (SI) is the inherited ability of a flowering plant to prevent self-fertilization by discriminating between self and non-self pollen during pollination. In many species of the Solanaceae, self-incompatibility is controlled by the single, multiallelic locus S. This stylar glycoprotein is associated with expression of self-incompatibility in potato. The protein is Ribonuclease S-6 of Nicotiana alata (Winged tobacco).